A 145-amino-acid chain; its full sequence is Histone H2B.1, sperm (145 aa).

Positions 1-52 (MPSQKSPTKRSPTKRSPTKRSPQKGGKGGKGAKRGGKAGKRRRGVQVKRRRR) are disordered. 4 short sequence motifs (SPKK motif) span residues 6-9 (SPTK), 11-14 (SPTK), 16-19 (SPTK), and 21-24 (SPQK). 2 stretches are compositionally biased toward basic residues: residues 7–22 (PTKR…KRSP) and 30–52 (KGAK…RRRR). Phosphoserine occurs at positions 16 and 21. S132 carries O-linked (GlcNAc) serine glycosylation. A Glycyl lysine isopeptide (Lys-Gly) (interchain with G-Cter in ubiquitin) cross-link involves residue K140.

Belongs to the histone H2B family. As to quaternary structure, the nucleosome is a histone octamer containing two molecules each of H2A, H2B, H3 and H4 assembled in one H3-H4 heterotetramer and two H2A-H2B heterodimers. The octamer wraps approximately 147 bp of DNA. In terms of processing, monoubiquitination of Lys-140 gives a specific tag for epigenetic transcriptional activation and is also prerequisite for histone H3 'Lys-4' and 'Lys-79' methylation. Post-translationally, phosphorylated on SPKK motifs 3 and 4; which may regulate DNA binding. Dephosphorylated during maturation of spermatids to mature sperm and rephosphorylated at fertilization. GlcNAcylation at Ser-132 promotes monoubiquitination of Lys-140. It fluctuates in response to extracellular glucose, and associates with transcribed genes.

It is found in the nucleus. The protein localises to the chromosome. Its function is as follows. Core component of nucleosome. Nucleosomes wrap and compact DNA into chromatin, limiting DNA accessibility to the cellular machineries which require DNA as a template. Histones thereby play a central role in transcription regulation, DNA repair, DNA replication and chromosomal stability. DNA accessibility is regulated via a complex set of post-translational modifications of histones, also called histone code, and nucleosome remodeling. The protein is Histone H2B.1, sperm of Parechinus angulosus (Angulate sea urchin).